The following is a 213-amino-acid chain: Penicillin-binding protein activator LpoB (213 aa).

An N-terminal signal peptide occupies residues 1-19 (MMKMNRYALVAALAIFLSG). C20 carries the N-palmitoyl cysteine lipid modification. Residue C20 is the site of S-diacylglycerol cysteine attachment. A disordered region spans residues 26-71 (PAPVDEVKPAPEQPAEPQQPVPVVPSVPTIPQQPGPIEHEDQTAQP). Over residues 36–50 (PEQPAEPQQPVPVVP) the composition is skewed to pro residues.

Belongs to the LpoB family. Interacts with PBP1b.

It is found in the cell outer membrane. Functionally, regulator of peptidoglycan synthesis that is essential for the function of penicillin-binding protein 1B (PBP1b). The sequence is that of Penicillin-binding protein activator LpoB from Citrobacter koseri (strain ATCC BAA-895 / CDC 4225-83 / SGSC4696).